We begin with the raw amino-acid sequence, 553 residues long: Protein DA1-related 1 (553 aa).

The segment at 10–41 (GSSHKFSDGQCNGRYREDRNLEGPRYSAEGSD) is disordered. A UIM 1 domain is found at 42–61 (FDKEEIECAIALSLSEQEHV). Residues 62 to 77 (IPQDDKGKKIIEYKSE) show a composition bias toward basic and acidic residues. The disordered stretch occupies residues 62-91 (IPQDDKGKKIIEYKSETEEDDDDDEDEDEE). Residues 78–91 (TEEDDDDDEDEDEE) show a composition bias toward acidic residues. Residues 87–106 (DEDEEYMRAQLEAAEEEERR) enclose the UIM 2 domain. Residues 122–141 (AQLEETEKLLAKARLEEEEM) enclose the UIM 3; degenerate domain. A UIM 4 domain is found at 149-168 (EEDELLAKALQESMNVGSPP). S166 carries the phosphoserine modification. Residues 188 to 248 (RICVGCQAEI…KLCYKEQHHP (61 aa)) form the LIM zinc-binding domain.

As to quaternary structure, interacts with ubiquitin, TCP14 and TCP15. Post-translationally, polyubiquitinated by DA2.

Acts redundantly with DA1 and DAR2 to regulate endoreduplication during leaf development. Together with DA1 and DAR2, modulates the protein stability of the transcription factors TCP14 and TCP15, which repress endoreduplication by directly regulating the expression of cell-cycle genes. This chain is Protein DA1-related 1, found in Arabidopsis thaliana (Mouse-ear cress).